We begin with the raw amino-acid sequence, 358 residues long: MATSSTTPQNLSFVLEGIHQVKFEDRPIPELRDPHDVIVNVKYTGICGSDVHYWEHGAIGHFVVKDPMVLGHESSGVVAKVGSAVTSLKVGDRVAMEPGVPCRRCEPCKAGKYNLCEKMAFAATPPYDGTLAKYYPLPEDFCYKLPENISLQEGALMEPLGVAVHITRQASIKPGESVVVFGAGPVGLLCCAVARAFGASKIIAVDIQKTRLDFAKKYAATAIFEPAKVSAVANADQMREENDLGPGADVVIDASGAEPSVHTGIHVLRPGGTYVQGGMGRNEINFPIMAACTKELTIKGSFRYGSGDYKLAVDLVASGKVNVKDLITGVVEFQEAEQAFKEVKAGKGIKTLIAGVRD.

Zn(2+) contacts are provided by Cys47, His72, and Glu73. NAD(+) is bound at residue 182–187 (GAGPVG).

This sequence belongs to the zinc-containing alcohol dehydrogenase family. The cofactor is Zn(2+).

The catalysed reaction is xylitol + NAD(+) = D-xylulose + NADH + H(+). Its pathway is carbohydrate degradation; L-arabinose degradation via L-arabinitol; D-xylulose 5-phosphate from L-arabinose (fungal route): step 4/5. Its function is as follows. Xylitol dehydrogenase which catalyzes the conversion of xylitol to D-xylulose. Xylose is a major component of hemicelluloses such as xylan. Most fungi utilize D-xylose via three enzymatic reactions, xylose reductase (XR), xylitol dehydrogenase (XDH), and xylulokinase, to form xylulose 5-phosphate, which enters pentose phosphate pathway. This chain is Probable D-xylulose reductase A (xdhA), found in Aspergillus clavatus (strain ATCC 1007 / CBS 513.65 / DSM 816 / NCTC 3887 / NRRL 1 / QM 1276 / 107).